The sequence spans 127 residues: Phosphoribosyl-AMP cyclohydrolase (127 aa).

Residue Asp83 participates in Mg(2+) binding. Cys84 provides a ligand contact to Zn(2+). Positions 85 and 87 each coordinate Mg(2+). 2 residues coordinate Zn(2+): Cys100 and Cys107.

This sequence belongs to the PRA-CH family. Homodimer. Requires Mg(2+) as cofactor. Zn(2+) is required as a cofactor.

The protein resides in the cytoplasm. It carries out the reaction 1-(5-phospho-beta-D-ribosyl)-5'-AMP + H2O = 1-(5-phospho-beta-D-ribosyl)-5-[(5-phospho-beta-D-ribosylamino)methylideneamino]imidazole-4-carboxamide. It functions in the pathway amino-acid biosynthesis; L-histidine biosynthesis; L-histidine from 5-phospho-alpha-D-ribose 1-diphosphate: step 3/9. Catalyzes the hydrolysis of the adenine ring of phosphoribosyl-AMP. The chain is Phosphoribosyl-AMP cyclohydrolase from Methanocaldococcus jannaschii (strain ATCC 43067 / DSM 2661 / JAL-1 / JCM 10045 / NBRC 100440) (Methanococcus jannaschii).